Consider the following 314-residue polypeptide: 4-hydroxy-3-methylbut-2-enyl diphosphate reductase (314 aa).

A [4Fe-4S] cluster-binding site is contributed by cysteine 12. Residues histidine 41 and histidine 74 each coordinate (2E)-4-hydroxy-3-methylbut-2-enyl diphosphate. Dimethylallyl diphosphate contacts are provided by histidine 41 and histidine 74. Isopentenyl diphosphate-binding residues include histidine 41 and histidine 74. Residue cysteine 96 coordinates [4Fe-4S] cluster. Histidine 124 serves as a coordination point for (2E)-4-hydroxy-3-methylbut-2-enyl diphosphate. A dimethylallyl diphosphate-binding site is contributed by histidine 124. Isopentenyl diphosphate is bound at residue histidine 124. The active-site Proton donor is glutamate 126. Threonine 167 is a (2E)-4-hydroxy-3-methylbut-2-enyl diphosphate binding site. Cysteine 197 provides a ligand contact to [4Fe-4S] cluster. 4 residues coordinate (2E)-4-hydroxy-3-methylbut-2-enyl diphosphate: serine 225, serine 226, asparagine 227, and serine 269. The dimethylallyl diphosphate site is built by serine 225, serine 226, asparagine 227, and serine 269. Isopentenyl diphosphate-binding residues include serine 225, serine 226, asparagine 227, and serine 269.

This sequence belongs to the IspH family. The cofactor is [4Fe-4S] cluster.

The catalysed reaction is isopentenyl diphosphate + 2 oxidized [2Fe-2S]-[ferredoxin] + H2O = (2E)-4-hydroxy-3-methylbut-2-enyl diphosphate + 2 reduced [2Fe-2S]-[ferredoxin] + 2 H(+). The enzyme catalyses dimethylallyl diphosphate + 2 oxidized [2Fe-2S]-[ferredoxin] + H2O = (2E)-4-hydroxy-3-methylbut-2-enyl diphosphate + 2 reduced [2Fe-2S]-[ferredoxin] + 2 H(+). It functions in the pathway isoprenoid biosynthesis; dimethylallyl diphosphate biosynthesis; dimethylallyl diphosphate from (2E)-4-hydroxy-3-methylbutenyl diphosphate: step 1/1. It participates in isoprenoid biosynthesis; isopentenyl diphosphate biosynthesis via DXP pathway; isopentenyl diphosphate from 1-deoxy-D-xylulose 5-phosphate: step 6/6. Its function is as follows. Catalyzes the conversion of 1-hydroxy-2-methyl-2-(E)-butenyl 4-diphosphate (HMBPP) into a mixture of isopentenyl diphosphate (IPP) and dimethylallyl diphosphate (DMAPP). Acts in the terminal step of the DOXP/MEP pathway for isoprenoid precursor biosynthesis. The protein is 4-hydroxy-3-methylbut-2-enyl diphosphate reductase of Haemophilus influenzae (strain PittEE).